We begin with the raw amino-acid sequence, 149 residues long: Ribosome maturation factor RimP (149 aa).

This sequence belongs to the RimP family.

It localises to the cytoplasm. Required for maturation of 30S ribosomal subunits. This chain is Ribosome maturation factor RimP, found in Sulfurimonas denitrificans (strain ATCC 33889 / DSM 1251) (Thiomicrospira denitrificans (strain ATCC 33889 / DSM 1251)).